Here is a 356-residue protein sequence, read N- to C-terminus: Protein MGF 360-10L (356 aa).

One copy of the ANK repeat lies at 57 to 89; sequence DLNTALMLATKENNYQLIKMFTDWGADINYGLI. Asn172 is a glycosylation site (N-linked (GlcNAc...) asparagine; by host). A helical membrane pass occupies residues 249 to 271; the sequence is NFLTIYYCFILGANINLAMIASI. 2 N-linked (GlcNAc...) asparagine; by host glycosylation sites follow: Asn352 and Asn353.

Belongs to the asfivirus MGF 360 family.

The protein resides in the host membrane. Its function is as follows. Plays a role in virus cell tropism, and may be required for efficient virus replication in macrophages. In African swine fever virus (isolate Tick/South Africa/Pretoriuskop Pr4/1996) (ASFV), this protein is Protein MGF 360-10L.